The sequence spans 201 residues: Ribosome maturation factor RimM (201 aa).

Positions 92–166 constitute a PRC barrel domain; it reads DEDEFYHADL…RVVVEPPANF (75 aa). Residues 169-201 form a disordered region; sequence PAGPQPAEGEEMPDGALEALEGEEAGAGTAPQP.

It belongs to the RimM family. Binds ribosomal protein uS19.

It localises to the cytoplasm. An accessory protein needed during the final step in the assembly of 30S ribosomal subunit, possibly for assembly of the head region. Essential for efficient processing of 16S rRNA. May be needed both before and after RbfA during the maturation of 16S rRNA. It has affinity for free ribosomal 30S subunits but not for 70S ribosomes. In Rhodospirillum centenum (strain ATCC 51521 / SW), this protein is Ribosome maturation factor RimM.